Reading from the N-terminus, the 400-residue chain is Probable peptidoglycan glycosyltransferase FtsW (400 aa).

11 consecutive transmembrane segments (helical) span residues 30-50 (LSVL…SIGI), 65-84 (QAAY…RIRL), 92-112 (GLLL…GVGV), 123-143 (LGLF…LYLA), 157-177 (FAGF…LLME), 179-199 (DFGA…LAGA), 201-221 (LWQF…LAIT), 247-267 (TQSL…GASV), 280-300 (FLFA…VVLL), 321-341 (LFGA…AFIN), and 356-376 (LPLM…VGLL).

The protein belongs to the SEDS family. FtsW subfamily.

It is found in the cell inner membrane. The enzyme catalyses [GlcNAc-(1-&gt;4)-Mur2Ac(oyl-L-Ala-gamma-D-Glu-L-Lys-D-Ala-D-Ala)](n)-di-trans,octa-cis-undecaprenyl diphosphate + beta-D-GlcNAc-(1-&gt;4)-Mur2Ac(oyl-L-Ala-gamma-D-Glu-L-Lys-D-Ala-D-Ala)-di-trans,octa-cis-undecaprenyl diphosphate = [GlcNAc-(1-&gt;4)-Mur2Ac(oyl-L-Ala-gamma-D-Glu-L-Lys-D-Ala-D-Ala)](n+1)-di-trans,octa-cis-undecaprenyl diphosphate + di-trans,octa-cis-undecaprenyl diphosphate + H(+). Its pathway is cell wall biogenesis; peptidoglycan biosynthesis. Peptidoglycan polymerase that is essential for cell division. The polypeptide is Probable peptidoglycan glycosyltransferase FtsW (Thioalkalivibrio sulfidiphilus (strain HL-EbGR7)).